Reading from the N-terminus, the 312-residue chain is Olfactory receptor 1F1 (312 aa).

The Extracellular portion of the chain corresponds to 1-25; that stretch reads MSGTNQSSVSEFLLLGLSRQPQQQH. Residue Asn5 is glycosylated (N-linked (GlcNAc...) asparagine). Residues 26–49 traverse the membrane as a helical segment; it reads LLFVFFLSMYLATVLGNLLIILSV. At 50 to 57 the chain is on the cytoplasmic side; it reads SIDSCLHT. Residues 58–79 form a helical membrane-spanning segment; it reads PMYFFLSNLSFVDICFSFTTVP. Over 80–100 the chain is Extracellular; it reads KMLANHILETQTISFCGCLTQ. Cys97 and Cys189 are disulfide-bonded. Residues 101-120 traverse the membrane as a helical segment; sequence MYFVFMFVDMDNFLLAVMAY. At 121–139 the chain is on the cytoplasmic side; it reads DHFVAVCHPLHYTAKMTHQ. A helical membrane pass occupies residues 140 to 158; it reads LCALLVAGLWVVANLNVLL. Over 159–196 the chain is Extracellular; it reads HTLLMAPLSFCADNAITHFFCDVTPLLKLSCSDTHLNE. Residues 197 to 219 form a helical membrane-spanning segment; that stretch reads VIILSEGALVMITPFLCILASYM. Residues 220 to 236 are Cytoplasmic-facing; it reads HITCTVLKVPSTKGRWK. A helical transmembrane segment spans residues 237-259; it reads AFSTCGSHLAVVLLFYSTIIAVY. The Extracellular portion of the chain corresponds to 260–272; that stretch reads FNPLSSHSAEKDT. The helical transmembrane segment at 273-292 threads the bilayer; the sequence is MATVLYTVVTPMLNPFIYSL. Residues 293–312 lie on the Cytoplasmic side of the membrane; sequence RNRYLKGALKKVVGRVVFSV.

Belongs to the G-protein coupled receptor 1 family.

It is found in the cell membrane. Its function is as follows. Odorant receptor. The sequence is that of Olfactory receptor 1F1 (OR1F1) from Homo sapiens (Human).